A 347-amino-acid polypeptide reads, in one-letter code: 5-deoxyribose 1-phosphate isomerase (347 aa).

Substrate-binding positions include 48–50, arginine 91, and glutamine 198; that span reads RGA. Catalysis depends on aspartate 239, which acts as the Proton donor. 249–250 provides a ligand contact to substrate; sequence NK.

Belongs to the EIF-2B alpha/beta/delta subunits family. DrdI subfamily.

It carries out the reaction 5-deoxy-alpha-D-ribose 1-phosphate = 5-deoxy-D-ribulose 1-phosphate. It functions in the pathway carbohydrate degradation. Functionally, catalyzes the isomerization of 5-deoxy-alpha-D-ribose 1-phosphate to 5-deoxy-D-ribulose 1-phosphate, as part of a 5-deoxyribose salvage pathway that recycles this toxic radical SAM enzyme by-product to mainstream metabolites. This Petrotoga mobilis (strain DSM 10674 / SJ95) protein is 5-deoxyribose 1-phosphate isomerase.